The following is a 434-amino-acid chain: Gamma-glutamyl phosphate reductase (434 aa).

Polar residues predominate over residues 1 to 11 (MTNSNEAQENA). Positions 1-26 (MTNSNEAQENALSPERQAERDEVLAK) are disordered. Residues 16–25 (RQAERDEVLA) show a composition bias toward basic and acidic residues.

It belongs to the gamma-glutamyl phosphate reductase family.

It is found in the cytoplasm. The catalysed reaction is L-glutamate 5-semialdehyde + phosphate + NADP(+) = L-glutamyl 5-phosphate + NADPH + H(+). The protein operates within amino-acid biosynthesis; L-proline biosynthesis; L-glutamate 5-semialdehyde from L-glutamate: step 2/2. Catalyzes the NADPH-dependent reduction of L-glutamate 5-phosphate into L-glutamate 5-semialdehyde and phosphate. The product spontaneously undergoes cyclization to form 1-pyrroline-5-carboxylate. The polypeptide is Gamma-glutamyl phosphate reductase (Corynebacterium jeikeium (strain K411)).